The sequence spans 153 residues: 17.3 kDa class I heat shock protein (153 aa).

The sHSP domain occupies 39-153 (ENSAFVSTRV…PDVKAIDISG (115 aa)).

This sequence belongs to the small heat shock protein (HSP20) family. Forms oligomeric structures.

The protein resides in the cytoplasm. This chain is 17.3 kDa class I heat shock protein (HSP17.3-B), found in Glycine max (Soybean).